Reading from the N-terminus, the 272-residue chain is Energy-coupling factor transporter ATP-binding protein EcfA1 (272 aa).

Positions 2 to 237 constitute an ABC transporter domain; sequence IKVSDVCFSY…KNIIEKAKID (236 aa). Position 37–44 (37–44) interacts with ATP; that stretch reads GHNGSGKS.

It belongs to the ABC transporter superfamily. Energy-coupling factor EcfA family. In terms of assembly, forms a stable energy-coupling factor (ECF) transporter complex composed of 2 membrane-embedded substrate-binding proteins (S component), 2 ATP-binding proteins (A component) and 2 transmembrane proteins (T component).

It localises to the cell membrane. In terms of biological role, ATP-binding (A) component of a common energy-coupling factor (ECF) ABC-transporter complex. Unlike classic ABC transporters this ECF transporter provides the energy necessary to transport a number of different substrates. The chain is Energy-coupling factor transporter ATP-binding protein EcfA1 from Mesomycoplasma hyopneumoniae (strain J / ATCC 25934 / NCTC 10110) (Mycoplasma hyopneumoniae).